Reading from the N-terminus, the 252-residue chain is MKTVTVKDLVIGTGAPKIIVSLMAKDIASVKSEALAYREADFDILEWRVDHYADLSNVESVLAAAKILRETMPEKPLLFTFRSAKEGGEQAISTEAYIALNRAAIDSGLVDMIDLELFTGDDQVKETVAYAHAHDVKVVMSNHDFHKTPEAEEIIARLRKMQSFDADIPKIALMPQSTSDVLTLLAATLEMQEQYADRPIITMSMAKTGVISRLAGEVFGSAATFGAVKKASAPGQISVNDLRTVLTILHQA.

Residues S21, 46–48, and R82 contribute to the 3-dehydroquinate site; that span reads EWR. H143 serves as the catalytic Proton donor/acceptor. K170 acts as the Schiff-base intermediate with substrate in catalysis. 3-dehydroquinate contacts are provided by R213, S232, and Q236.

This sequence belongs to the type-I 3-dehydroquinase family. As to quaternary structure, homodimer.

The enzyme catalyses 3-dehydroquinate = 3-dehydroshikimate + H2O. Its pathway is metabolic intermediate biosynthesis; chorismate biosynthesis; chorismate from D-erythrose 4-phosphate and phosphoenolpyruvate: step 3/7. Functionally, involved in the third step of the chorismate pathway, which leads to the biosynthesis of aromatic amino acids. Catalyzes the cis-dehydration of 3-dehydroquinate (DHQ) and introduces the first double bond of the aromatic ring to yield 3-dehydroshikimate. In Escherichia coli O7:K1 (strain IAI39 / ExPEC), this protein is 3-dehydroquinate dehydratase.